Consider the following 187-residue polypeptide: MGLTPAPQEGLVINPATDRPLAANDPYFLSINDKLADKGFLVTSTDELINWARTGSLMWMTFGLACCAVEMMQASMPRYDVERFGFAPRGSPRQSDVMIVAGTLTNKMAPALRKVYDQMPEPRYVISMGSCANGGGYYHYSYSVVRGCDRIVPVDIYVPGCPPSAEALLYGILLLQRKIRRTGTIER.

Residues cysteine 66, cysteine 67, cysteine 131, and cysteine 161 each coordinate [4Fe-4S] cluster.

This sequence belongs to the complex I 20 kDa subunit family. As to quaternary structure, NDH-1 is composed of 14 different subunits. Subunits NuoB, C, D, E, F, and G constitute the peripheral sector of the complex. It depends on [4Fe-4S] cluster as a cofactor.

The protein resides in the cell inner membrane. The enzyme catalyses a quinone + NADH + 5 H(+)(in) = a quinol + NAD(+) + 4 H(+)(out). Functionally, NDH-1 shuttles electrons from NADH, via FMN and iron-sulfur (Fe-S) centers, to quinones in the respiratory chain. The immediate electron acceptor for the enzyme in this species is believed to be ubiquinone. Couples the redox reaction to proton translocation (for every two electrons transferred, four hydrogen ions are translocated across the cytoplasmic membrane), and thus conserves the redox energy in a proton gradient. This chain is NADH-quinone oxidoreductase subunit B, found in Methylocella silvestris (strain DSM 15510 / CIP 108128 / LMG 27833 / NCIMB 13906 / BL2).